A 595-amino-acid polypeptide reads, in one-letter code: Elongation factor 4 (595 aa).

The 183-residue stretch at 2 to 184 folds into the tr-type G domain; that stretch reads SHIRNFSIIA…RLVATIPAPT (183 aa). GTP is bound by residues 14–19 and 131–134; these read DHGKST and NKMD.

This sequence belongs to the TRAFAC class translation factor GTPase superfamily. Classic translation factor GTPase family. LepA subfamily.

It localises to the cell inner membrane. It carries out the reaction GTP + H2O = GDP + phosphate + H(+). Functionally, required for accurate and efficient protein synthesis under certain stress conditions. May act as a fidelity factor of the translation reaction, by catalyzing a one-codon backward translocation of tRNAs on improperly translocated ribosomes. Back-translocation proceeds from a post-translocation (POST) complex to a pre-translocation (PRE) complex, thus giving elongation factor G a second chance to translocate the tRNAs correctly. Binds to ribosomes in a GTP-dependent manner. This chain is Elongation factor 4, found in Pseudomonas savastanoi pv. phaseolicola (strain 1448A / Race 6) (Pseudomonas syringae pv. phaseolicola (strain 1448A / Race 6)).